The chain runs to 602 residues: Glutathione-regulated potassium-efflux system protein KefB (602 aa).

The next 13 helical transmembrane spans lie at 4–24 (TGLL…VPIA), 29–49 (IGAV…GLGF), 55–75 (EILH…GLEL), 87–107 (IFGV…ALLY), 115–135 (AAVI…LQLM), 152–172 (VLLF…ILAG), 181–201 (VKIG…RYLL), 207–227 (YIVA…VVLG), 230–250 (LFMD…GILL), 261–281 (IAIE…VGMA), 296–318 (LGVL…VFGL), 326–346 (FAGV…AAFS), and 356–376 (ALLL…MQVI). The RCK N-terminal domain maps to 400-519 (DPQVIIVGFG…NGVKDFTRET (120 aa)).

Belongs to the monovalent cation:proton antiporter 2 (CPA2) transporter (TC 2.A.37) family. KefB subfamily. As to quaternary structure, interacts with the regulatory subunit KefG.

The protein localises to the cell inner membrane. In terms of biological role, pore-forming subunit of a potassium efflux system that confers protection against electrophiles. Catalyzes K(+)/H(+) antiport. This Yersinia pestis bv. Antiqua (strain Antiqua) protein is Glutathione-regulated potassium-efflux system protein KefB.